We begin with the raw amino-acid sequence, 215 residues long: 3-demethoxyubiquinol 3-hydroxylase (215 aa).

The Fe cation site is built by Glu64, Glu94, His97, Glu146, Glu178, and His181.

This sequence belongs to the COQ7 family. The cofactor is Fe cation.

It is found in the cell membrane. It catalyses the reaction a 5-methoxy-2-methyl-3-(all-trans-polyprenyl)benzene-1,4-diol + AH2 + O2 = a 3-demethylubiquinol + A + H2O. The protein operates within cofactor biosynthesis; ubiquinone biosynthesis. In terms of biological role, catalyzes the hydroxylation of 2-nonaprenyl-3-methyl-6-methoxy-1,4-benzoquinol during ubiquinone biosynthesis. The polypeptide is 3-demethoxyubiquinol 3-hydroxylase (Pseudomonas fluorescens (strain Pf0-1)).